The chain runs to 347 residues: Guanine nucleotide-binding protein alpha-6 subunit (347 aa).

Residues 30 to 347 (GITQVLLLGA…IIVGHVMDLV (318 aa)) form the G-alpha domain. The interval 33-46 (QVLLLGAGESGKST) is G1 motif. GTP is bound by residues 38 to 45 (GAGESGKS), 172 to 178 (LRARVTT), 197 to 201 (DVGGQ), 266 to 269 (NKKD), and Ala322. Positions 45 and 178 each coordinate Mg(2+). The segment at 170–178 (DALRARVTT) is G2 motif. Residues 193–202 (MKIIDVGGQR) are G3 motif. The interval 262–269 (ILFLNKKD) is G4 motif. The segment at 320 to 325 (TIAVDT) is G5 motif.

It belongs to the G-alpha family. In terms of assembly, g proteins are composed of 3 units; alpha, beta and gamma. The alpha chain contains the guanine nucleotide binding site.

Guanine nucleotide-binding proteins (G proteins) are involved as modulators or transducers in various transmembrane signaling systems. G alpha-6 is involved in the folic acid chemotaxis signal transduction pathway. This chain is Guanine nucleotide-binding protein alpha-6 subunit (gpaF), found in Dictyostelium discoideum (Social amoeba).